A 1385-amino-acid polypeptide reads, in one-letter code: Contactin-associated protein 1 (1385 aa).

The N-terminal stretch at 1-20 is a signal peptide; that stretch reads MMSLRLFSILLATVVSGAWG. Over 21–1284 the chain is Extracellular; sequence WGYYGCNEEL…PYYHDDGWIA (1264 aa). One can recognise an F5/8 type C domain in the interval 26 to 169; the sequence is CNEELVGPLY…IGLRLGIYGC (144 aa). Cys-26 and Cys-169 are joined by a disulfide. N-linked (GlcNAc...) asparagine glycosylation is found at Asn-121, Asn-129, and Asn-277. Laminin G-like domains lie at 204–356 and 390–539; these read FKTE…AFRC and FRTW…FDTC. Residues Cys-324 and Cys-356 are joined by a disulfide bond. Asn-421, Asn-500, and Asn-519 each carry an N-linked (GlcNAc...) asparagine glycan. 4 cysteine pairs are disulfide-bonded: Cys-507–Cys-539, Cys-545–Cys-556, Cys-550–Cys-565, and Cys-567–Cys-577. Positions 545–577 constitute an EGF-like 1 domain; that stretch reads CSPNMCEHDGRCYQSWDDFICYCELTGYKGVTC. The region spanning 577-796 is the Fibrinogen C-terminal domain; that stretch reads CHEPLYKESC…NTISFHTGAA (220 aa). N-linked (GlcNAc...) asparagine glycosylation is found at Asn-598, Asn-654, Asn-665, Asn-764, Asn-805, Asn-844, Asn-861, Asn-949, and Asn-957. Positions 814–958 constitute a Laminin G-like 3 domain; sequence FRTSAPSGVF…NASEGTFPNC (145 aa). Cystine bridges form between Cys-931/Cys-958, Cys-962/Cys-975, Cys-969/Cys-984, and Cys-986/Cys-996. In terms of domain architecture, EGF-like 2 spans 962–996; the sequence is CTHPRFPCFHGGRCVERYSYYTCDCDLTAFDGPYC. Residues Asn-1079 and Asn-1148 are each glycosylated (N-linked (GlcNAc...) asparagine). One can recognise a Laminin G-like 4 domain in the interval 1089-1251; it reads FSTNSAPAVL…VQGELSESNC (163 aa). A disulfide bridge connects residues Cys-1210 and Cys-1251. The chain crosses the membrane as a helical span at residues 1285-1305; sequence ILLGFLVAFLLLGLVGMLVLF. Over 1306 to 1385 the chain is Cytoplasmic; sequence YLQNHRYKGS…PQILEESRSE (80 aa). A disordered region spans residues 1317–1385; that stretch reads HTNEPKATHD…PQILEESRSE (69 aa). Residues 1319 to 1329 show a composition bias toward basic and acidic residues; sequence NEPKATHDSHP. The segment covering 1334-1367 has biased composition (pro residues); the sequence is PLPPSGPAQAPAPTPAPTQLPTPAPAPAPAPASG. Positions 1334–1370 match the SH3-binding motif; the sequence is PLPPSGPAQAPAPTPAPTQLPTPAPAPAPAPASGPGP. Residue Ser-1384 is modified to Phosphoserine.

Belongs to the neurexin family. Interacts with CNTN1/contactin in cis form. In terms of tissue distribution, expressed in brain. In myelinated nerve fibers predominantly found in paranodal axoglial junctions. In the internodal region of myelinated axons in the CNS and the PNS also found as a thin line apposing the inner mesaxon of the myelin sheath. In PNS neurons this line forms a circumferential ring that apposes the innermost aspect of Schmidt-Lanterman incisures.

The protein localises to the membrane. Its subcellular location is the cell junction. It localises to the paranodal septate junction. Its function is as follows. Required, with CNTNAP2, for radial and longitudinal organization of myelinated axons. Plays a role in the formation of functional distinct domains critical for saltatory conduction of nerve impulses in myelinated nerve fibers. Demarcates the paranodal region of the axo-glial junction. In association with contactin involved in the signaling between axons and myelinating glial cells. This chain is Contactin-associated protein 1 (Cntnap1), found in Mus musculus (Mouse).